The chain runs to 107 residues: Large ribosomal subunit protein bL21 (107 aa).

Belongs to the bacterial ribosomal protein bL21 family. In terms of assembly, part of the 50S ribosomal subunit. Contacts protein L20.

This protein binds to 23S rRNA in the presence of protein L20. This chain is Large ribosomal subunit protein bL21, found in Chlamydia trachomatis serovar L2 (strain ATCC VR-902B / DSM 19102 / 434/Bu).